Consider the following 343-residue polypeptide: S-adenosylmethionine:tRNA ribosyltransferase-isomerase (343 aa).

The protein belongs to the QueA family. As to quaternary structure, monomer.

The protein localises to the cytoplasm. It carries out the reaction 7-aminomethyl-7-carbaguanosine(34) in tRNA + S-adenosyl-L-methionine = epoxyqueuosine(34) in tRNA + adenine + L-methionine + 2 H(+). The protein operates within tRNA modification; tRNA-queuosine biosynthesis. In terms of biological role, transfers and isomerizes the ribose moiety from AdoMet to the 7-aminomethyl group of 7-deazaguanine (preQ1-tRNA) to give epoxyqueuosine (oQ-tRNA). The protein is S-adenosylmethionine:tRNA ribosyltransferase-isomerase of Borreliella burgdorferi (strain ATCC 35210 / DSM 4680 / CIP 102532 / B31) (Borrelia burgdorferi).